The chain runs to 335 residues: Protein-glutamate methylesterase/protein-glutamine glutaminase 3 (335 aa).

The Response regulatory domain occupies 2 to 119 (RIGIVNDMPL…GNPQTAAAPL (118 aa)). Asp-53 is modified (4-aspartylphosphate). One can recognise a CheB-type methylesterase domain in the interval 144 to 335 (PKAGGARQRL…IAPRLAEVFD (192 aa)). Residues Ser-159, His-186, and Asp-279 contribute to the active site.

This sequence belongs to the CheB family. Phosphorylated by CheA. Phosphorylation of the N-terminal regulatory domain activates the methylesterase activity.

It localises to the cytoplasm. It catalyses the reaction [protein]-L-glutamate 5-O-methyl ester + H2O = L-glutamyl-[protein] + methanol + H(+). It carries out the reaction L-glutaminyl-[protein] + H2O = L-glutamyl-[protein] + NH4(+). Functionally, involved in chemotaxis. Part of a chemotaxis signal transduction system that modulates chemotaxis in response to various stimuli. Catalyzes the demethylation of specific methylglutamate residues introduced into the chemoreceptors (methyl-accepting chemotaxis proteins or MCP) by CheR. Also mediates the irreversible deamidation of specific glutamine residues to glutamic acid. The protein is Protein-glutamate methylesterase/protein-glutamine glutaminase 3 of Pseudomonas aeruginosa (strain ATCC 15692 / DSM 22644 / CIP 104116 / JCM 14847 / LMG 12228 / 1C / PRS 101 / PAO1).